A 432-amino-acid chain; its full sequence is Serine--tRNA ligase (432 aa).

Residue 239–241 (TSE) participates in L-serine binding. 270–272 (RSE) contributes to the ATP binding site. Glu-293 lines the L-serine pocket. 357–360 (EISS) provides a ligand contact to ATP. An L-serine-binding site is contributed by Ser-392.

The protein belongs to the class-II aminoacyl-tRNA synthetase family. Type-1 seryl-tRNA synthetase subfamily. In terms of assembly, homodimer. The tRNA molecule binds across the dimer.

Its subcellular location is the cytoplasm. The catalysed reaction is tRNA(Ser) + L-serine + ATP = L-seryl-tRNA(Ser) + AMP + diphosphate + H(+). The enzyme catalyses tRNA(Sec) + L-serine + ATP = L-seryl-tRNA(Sec) + AMP + diphosphate + H(+). The protein operates within aminoacyl-tRNA biosynthesis; selenocysteinyl-tRNA(Sec) biosynthesis; L-seryl-tRNA(Sec) from L-serine and tRNA(Sec): step 1/1. Functionally, catalyzes the attachment of serine to tRNA(Ser). Is also able to aminoacylate tRNA(Sec) with serine, to form the misacylated tRNA L-seryl-tRNA(Sec), which will be further converted into selenocysteinyl-tRNA(Sec). The sequence is that of Serine--tRNA ligase from Methylibium petroleiphilum (strain ATCC BAA-1232 / LMG 22953 / PM1).